The following is a 161-amino-acid chain: Protein-export protein SecB (161 aa).

The protein belongs to the SecB family. Homotetramer, a dimer of dimers. One homotetramer interacts with 1 SecA dimer.

The protein resides in the cytoplasm. Its function is as follows. One of the proteins required for the normal export of preproteins out of the cell cytoplasm. It is a molecular chaperone that binds to a subset of precursor proteins, maintaining them in a translocation-competent state. It also specifically binds to its receptor SecA. The sequence is that of Protein-export protein SecB from Coxiella burnetii (strain CbuG_Q212) (Coxiella burnetii (strain Q212)).